A 520-amino-acid polypeptide reads, in one-letter code: Ribonuclease Y (520 aa).

A helical transmembrane segment spans residues 4-24 (VSGILLVLIGLLAGVGLGVLL). One can recognise a KH domain in the interval 210 to 270 (TVSVVNLPNE…VRREVARVSL (61 aa)). Positions 336-429 (VLQHSREVAF…VQAADALSGA (94 aa)) constitute an HD domain.

Belongs to the RNase Y family.

It is found in the cell membrane. In terms of biological role, endoribonuclease that initiates mRNA decay. The polypeptide is Ribonuclease Y (Syntrophobacter fumaroxidans (strain DSM 10017 / MPOB)).